The following is a 309-amino-acid chain: MSKIVVALGGNALGQSPKEQLDLLKSTSKSLVSLIDKGYEIVISHGNGPQVGSINLGLNYAAEHKQGPPFPFPECGAMSQAYIGYQMQESLQNELHSMGIDKEVVTLVTQVQVASDDSAFNNPTKPIGLFYTKEQADKFTKEKGYTFVEDSGRGYRRVVPSPQPISIVELDSIETLITHGTLVIAAGGGGIPVIKENEVYTGVDAVIDKDKTSALLAAHLQSDQLIILTAVDHVYINYGKENQRGLDEVSVDEMKKHISDGQFAKGSMLPKVEAALQFLEKNTKGSVLITSLAGLGDALDGKIGTLIKN.

This sequence belongs to the carbamate kinase family.

The protein localises to the cytoplasm. The catalysed reaction is hydrogencarbonate + NH4(+) + ATP = carbamoyl phosphate + ADP + H2O + H(+). It participates in metabolic intermediate metabolism; carbamoyl phosphate degradation; CO(2) and NH(3) from carbamoyl phosphate: step 1/1. The polypeptide is Carbamate kinase 2 (arcC2) (Staphylococcus epidermidis (strain ATCC 12228 / FDA PCI 1200)).